Reading from the N-terminus, the 237-residue chain is MYSVIIVAAGSGRRMNLDINKQFIKLREKEIIAHTIQVFYENINIDEIVVCIKKEEEDFFKENIINKYNFKNIKIAYGGKERQDSIYNGLKKLDKNCDIVLIHDGARPFVDHRIINESIKVAKEKKAVVVGVPVSDTIKIVSDGTVKETPERNLLWAAQTPQTFEYNLIIDAYEQAYKNNYYGTDDSMLVENIGQSVTMVMGSYENIKITSPEDLNIAEQILNMEKRDEVNSRRRII.

It belongs to the IspD/TarI cytidylyltransferase family. IspD subfamily.

It carries out the reaction 2-C-methyl-D-erythritol 4-phosphate + CTP + H(+) = 4-CDP-2-C-methyl-D-erythritol + diphosphate. It functions in the pathway isoprenoid biosynthesis; isopentenyl diphosphate biosynthesis via DXP pathway; isopentenyl diphosphate from 1-deoxy-D-xylulose 5-phosphate: step 2/6. In terms of biological role, catalyzes the formation of 4-diphosphocytidyl-2-C-methyl-D-erythritol from CTP and 2-C-methyl-D-erythritol 4-phosphate (MEP). This chain is 2-C-methyl-D-erythritol 4-phosphate cytidylyltransferase, found in Clostridioides difficile (strain 630) (Peptoclostridium difficile).